The following is a 181-amino-acid chain: Ferritin heavy chain (181 aa).

One can recognise a Ferritin-like diiron domain in the interval 10 to 159 (QNYHQDCEAA…DHVTNLRKMG (150 aa)). E27, E62, H65, E107, and Q141 together coordinate Fe cation.

It belongs to the ferritin family. In terms of assembly, oligomer of 24 subunits. There are two types of subunits: L (light) chain and H (heavy) chain. The major chain can be light or heavy, depending on the species and tissue type. The functional molecule forms a roughly spherical shell with a diameter of 12 nm and contains a central cavity into which the insoluble mineral iron core is deposited. As to expression, expressed in erythroblasts (at protein level). Expressed in heart, liver, spleen, lung, kidney, large intestine, small intestine, muscle, glandular stomach, ovary and oviduct.

Its subcellular location is the cytoplasm. The protein localises to the lysosome. It localises to the cytoplasmic vesicle. The protein resides in the autophagosome. It carries out the reaction 4 Fe(2+) + O2 + 4 H(+) = 4 Fe(3+) + 2 H2O. Its function is as follows. Stores iron in a soluble, non-toxic, readily available form. Important for iron homeostasis. Has ferroxidase activity. Iron is taken up in the ferrous form and deposited as ferric hydroxides after oxidation. Also plays a role in delivery of iron to cells. Mediates iron uptake in capsule cells of the developing kidney. Delivery to lysosomes is mediated by the cargo receptor NCOA4 for autophagic degradation and release of iron. Inhibits translation of various mRNA species in vitro. Associates with a 35S prosome-like particle that contains non-translated mRNAs in a complex with proteins. May be involved in pre-translational regulation of some mRNA. In Anas platyrhynchos (Mallard), this protein is Ferritin heavy chain.